The primary structure comprises 226 residues: Glyceraldehyde 3-phosphate phosphatase (226 aa).

The protein belongs to the HAD-like hydrolase superfamily. Mg(2+) is required as a cofactor.

Its function is as follows. Catalyzes the dephosphorylation of D,L-glyceraldehyde 3-phosphate in vitro. This chain is Glyceraldehyde 3-phosphate phosphatase, found in Methanothermobacter thermautotrophicus (strain ATCC 29096 / DSM 1053 / JCM 10044 / NBRC 100330 / Delta H) (Methanobacterium thermoautotrophicum).